A 314-amino-acid chain; its full sequence is DNA-directed RNA polymerase subunit alpha (314 aa).

The tract at residues 1 to 228 (MIEIEKPKIE…EHLNIFVGLT (228 aa)) is alpha N-terminal domain (alpha-NTD). The tract at residues 245–314 (KEKVLEMTIE…ELGLSLRKDD (70 aa)) is alpha C-terminal domain (alpha-CTD).

The protein belongs to the RNA polymerase alpha chain family. As to quaternary structure, homodimer. The RNAP catalytic core consists of 2 alpha, 1 beta, 1 beta' and 1 omega subunit. When a sigma factor is associated with the core the holoenzyme is formed, which can initiate transcription.

The enzyme catalyses RNA(n) + a ribonucleoside 5'-triphosphate = RNA(n+1) + diphosphate. DNA-dependent RNA polymerase catalyzes the transcription of DNA into RNA using the four ribonucleoside triphosphates as substrates. The sequence is that of DNA-directed RNA polymerase subunit alpha from Geobacillus thermodenitrificans (strain NG80-2).